A 123-amino-acid polypeptide reads, in one-letter code: Ribosome-binding factor A (123 aa).

The protein belongs to the RbfA family. Monomer. Binds 30S ribosomal subunits, but not 50S ribosomal subunits or 70S ribosomes.

Its subcellular location is the cytoplasm. One of several proteins that assist in the late maturation steps of the functional core of the 30S ribosomal subunit. Associates with free 30S ribosomal subunits (but not with 30S subunits that are part of 70S ribosomes or polysomes). Required for efficient processing of 16S rRNA. May interact with the 5'-terminal helix region of 16S rRNA. The protein is Ribosome-binding factor A of Neisseria gonorrhoeae (strain NCCP11945).